The sequence spans 111 residues: Ribonuclease P protein component (111 aa).

It belongs to the RnpA family. As to quaternary structure, consists of a catalytic RNA component (M1 or rnpB) and a protein subunit.

The catalysed reaction is Endonucleolytic cleavage of RNA, removing 5'-extranucleotides from tRNA precursor.. RNaseP catalyzes the removal of the 5'-leader sequence from pre-tRNA to produce the mature 5'-terminus. It can also cleave other RNA substrates such as 4.5S RNA. The protein component plays an auxiliary but essential role in vivo by binding to the 5'-leader sequence and broadening the substrate specificity of the ribozyme. The polypeptide is Ribonuclease P protein component (Fusobacterium nucleatum subsp. nucleatum (strain ATCC 25586 / DSM 15643 / BCRC 10681 / CIP 101130 / JCM 8532 / KCTC 2640 / LMG 13131 / VPI 4355)).